The following is a 526-amino-acid chain: Microphthalmia-associated transcription factor (526 aa).

A disordered region spans residues 20–54 (EPKTYYELKSQPLKSSSSAEHSGASKPPLSSSTMT). Residues 34–44 (SSSSAEHSGAS) are compositionally biased toward low complexity. At Ser-180 the chain carries Phosphoserine; by MAPK. Residue Lys-289 forms a Glycyl lysine isopeptide (Lys-Gly) (interchain with G-Cter in SUMO) linkage. The bHLH domain maps to 311-364 (QKKDNHNLIERRRRFNINDRIKELGTLIPKSNDPDMRWNKGTILKASVDYIRKL). A coiled-coil region spans residues 355–401 (KASVDYIRKLQREQQRAKDLENRQKKLEHANRHLLLRVQELEMQARA). Residues 374 to 395 (LENRQKKLEHANRHLLLRVQEL) form a leucine-zipper region. A Phosphoserine; by GSK3 modification is found at Ser-405. Residue Ser-414 is modified to Phosphoserine. Lys-423 participates in a covalent cross-link: Glycyl lysine isopeptide (Lys-Gly) (interchain with G-Cter in SUMO). Ser-491 carries the phosphoserine modification. The tract at residues 496 to 526 (TDPLLSSVSPGASKTSSRRSSMSAEETEHAC) is disordered. The span at 507 to 519 (ASKTSSRRSSMSA) shows a compositional bias: low complexity. Ser-516 is modified (phosphoserine; by RPS6KA1).

The protein belongs to the MiT/TFE family. As to quaternary structure, homodimer or heterodimer; dimerization is mediated via the coiled coil region. Efficient DNA binding requires dimerization with another bHLH protein. Binds DNA in the form of homodimer or heterodimer with either TFE3, TFEB or TFEC. Identified in a complex with HINT1 and CTNNB1. Interacts with KARS1. Interacts with VSX2. In terms of processing, phosphorylation at Ser-405 significantly enhances the ability to bind the tyrosinase promoter. Phosphorylated at Ser-180 and Ser-516 following KIT signaling, triggering a short live activation: Phosphorylation at Ser-180 and Ser-516 by MAPK and RPS6KA1, respectively, activate the transcription factor activity but also promote ubiquitination and subsequent degradation by the proteasome. Phosphorylated in response to blue light (415nm). Ubiquitinated following phosphorylation at Ser-180, leading to subsequent degradation by the proteasome. Deubiquitinated by USP13, preventing its degradation.

The protein resides in the nucleus. It is found in the cytoplasm. Functionally, transcription factor that regulates the expression of genes with essential roles in cell differentiation, proliferation and survival. Binds to M-boxes (5'-TCATGTG-3') and symmetrical DNA sequences (E-boxes) (5'-CACGTG-3') found in the promoters of target genes, such as BCL2 and tyrosinase (TYR). Plays an important role in melanocyte development by regulating the expression of tyrosinase (TYR) and tyrosinase-related protein 1 (TYRP1). Plays a critical role in the differentiation of various cell types, such as neural crest-derived melanocytes, mast cells, osteoclasts and optic cup-derived retinal pigment epithelium. The protein is Microphthalmia-associated transcription factor (Mitf) of Rattus norvegicus (Rat).